The sequence spans 199 residues: NAD(P)H dehydrogenase (quinone) (199 aa).

Positions 4–190 constitute a Flavodoxin-like domain; the sequence is VLVLYYSAYG…NGARYQGRTI (187 aa). Residues 10–15 and 78–80 each bind FMN; these read SAYGHI and TRF. Position 12 (Tyr12) interacts with NAD(+). Trp98 contacts substrate. Residues 113–119 and His134 each bind FMN; that span reads STATQHG.

It belongs to the WrbA family. FMN serves as cofactor.

It catalyses the reaction a quinone + NADH + H(+) = a quinol + NAD(+). It carries out the reaction a quinone + NADPH + H(+) = a quinol + NADP(+). In Afipia carboxidovorans (strain ATCC 49405 / DSM 1227 / KCTC 32145 / OM5) (Oligotropha carboxidovorans), this protein is NAD(P)H dehydrogenase (quinone).